Here is a 107-residue protein sequence, read N- to C-terminus: Integration host factor subunit beta (107 aa).

A disordered region spans residues 78 to 107 (PHFKPGKELRERVDGRAGEPLKADEPDDER). Basic and acidic residues predominate over residues 82–101 (PGKELRERVDGRAGEPLKAD).

This sequence belongs to the bacterial histone-like protein family. As to quaternary structure, heterodimer of an alpha and a beta chain.

Its function is as follows. This protein is one of the two subunits of integration host factor, a specific DNA-binding protein that functions in genetic recombination as well as in transcriptional and translational control. In Burkholderia multivorans (strain ATCC 17616 / 249), this protein is Integration host factor subunit beta.